Here is a 436-residue protein sequence, read N- to C-terminus: Drebrin-like protein (436 aa).

The ADF-H domain maps to 2–133 (AVNLSRNGPA…EPECIMEKVA (132 aa)). Phosphothreonine is present on Thr-26. Ser-160 carries the phosphoserine modification. Lys-176 is subject to N6-acetyllysine. A coiled-coil region spans residues 179–233 (FWAKAEKEEENRRLEEKRRAEEERQRLEEERRERELQEAARREQRYQEQHRSAGA). Basic and acidic residues-rich tracts occupy residues 185–229 (KEEE…EQHR) and 264–275 (HPREIFKQKERA). A disordered region spans residues 185–341 (KEEENRRLEE…AQTEEEPTYE (157 aa)). Residues 276-286 (MSTTSVTSSQP) show a composition bias toward polar residues. Residues Ser-277, Ser-280, Ser-283, and Ser-291 each carry the phosphoserine modification. Positions 294 to 303 (LQKQLTQPET) are enriched in polar residues. Lys-296 is modified (N6-acetyllysine). Thr-299 is subject to Phosphothreonine. Phosphotyrosine occurs at positions 340 and 350. In terms of domain architecture, SH3 spans 377 to 436 (GQGLCARALYDYQAADDTEISFDPENLITGIEVIDEGWWRGYGPDGHFGMFPANYVELIE).

It belongs to the ABP1 family. Interacts with SHANK3, SYN1 and PRAM1. Interacts with SHANK2. Interacts with FGD1, DNM1 and MAP4K1. Interacts with ANKRD54. Interacts with COBL. Interacts with WASL and WIPF1. As to expression, detected in hippocampus neurons and in the Purkinje cell layer in cerebellum (at protein level). Predominantly expressed in brain, thymus and spleen. Also found in testis, heart and lung. Little or no expression detected in ovary or muscle.

Its subcellular location is the cytoplasm. It is found in the cytoskeleton. It localises to the cell projection. The protein resides in the lamellipodium. The protein localises to the ruffle. Its subcellular location is the cell cortex. It is found in the cytosol. It localises to the synapse. The protein resides in the perikaryon. The protein localises to the neuron projection. Its subcellular location is the cell membrane. It is found in the cytoplasmic vesicle. It localises to the clathrin-coated vesicle membrane. The protein resides in the golgi apparatus membrane. The protein localises to the podosome. Its subcellular location is the early endosome. It is found in the dendrite. It localises to the postsynaptic density. Its function is as follows. Adapter protein that binds F-actin and DNM1, and thereby plays a role in receptor-mediated endocytosis. Plays a role in the reorganization of the actin cytoskeleton, formation of cell projections, such as neurites, in neuron morphogenesis and synapse formation via its interaction with WASL and COBL. Does not bind G-actin and promote actin polymerization by itself. Required for the formation of organized podosome rosettes. May act as a common effector of antigen receptor-signaling pathways in leukocytes. Acts as a key component of the immunological synapse that regulates T-cell activation by bridging TCRs and the actin cytoskeleton to gene activation and endocytic processes. This is Drebrin-like protein from Mus musculus (Mouse).